We begin with the raw amino-acid sequence, 886 residues long: uncharacterized protein (886 aa).

The first 20 residues, 1 to 20 (MKIIKSLILLVLFMASPAKG), serve as a signal peptide directing secretion. A run of 5 helical transmembrane segments spans residues 520 to 540 (VTIFGLMFVLGALKLTAVEVV), 609 to 629 (LLFIQLLQIHNGLAFIVIITI), 647 to 667 (VIAFIGLTVMISLAPFFIILM), 680 to 700 (ISILFSYVVQPTILLIFFLLI), and 779 to 799 (LLFYSYCLMSYGLVSFVTIVV). A disordered region spans residues 856–886 (EARKPQGGGEHTGKFFQNRNDVKPEQTERND). The span at 875–886 (NDVKPEQTERND) shows a compositional bias: basic and acidic residues.

Belongs to the TrbL/VirB6 family.

It is found in the cell membrane. This is an uncharacterized protein from Rickettsia bellii (strain RML369-C).